A 256-amino-acid chain; its full sequence is uncharacterized protein (256 aa).

The protein belongs to the glycosyltransferase 2 family.

This is an uncharacterized protein from Acanthamoeba polyphaga mimivirus (APMV).